Reading from the N-terminus, the 520-residue chain is MDEERALYIVRAGEAGAIERVLRDYSDKHRATFKFESADEDKRKKLCEGIFKVLVKGVPTTCQVPCLEVLRILSRDKKILAPVTTEENMQILLRLAKLHESDDSLEKVSEFPVIVESLKCLCNIVFNSQVAQQLSLELNLAAKLCNLLRKCKDRKFINDIKCFDLRLLFVLSLLHTDIRSQLRYELQGLPLLTQILESAFSIKWTDEYESAIDHSGPPLSPQETDCAIEALKALFNVTVDSWKVHKESDSHQFRVMAAVLRHCLLIVGPTEDKTEELHSNAVNLLSNVPVSCLDVLICPLTHEETAQEAATLDELPGDKTAEKDTALKSSAMVYNGMNMEAIHVLLSFMEKRIDKGSSYREGLTPVLSLLTECSRAHRNIRKFLKDQVLPPLRDVTNRPEVGSTVRNKLVRLMTHVDLGVKQIAAEFLFVLCKERVDSLLKYTGYGNAAGLLAARGLLAGGRGDNWYSEDEDTDTEEYKNAKPKEELLKPMGLKPDGTITPLEEALSQYSVIEETSSDTD.

Ser468 is subject to Phosphoserine. Residue Thr473 is modified to Phosphothreonine.

The protein belongs to the synembryn family. As to quaternary structure, interacts with GDP-bound G(s) G-alpha proteins GNAL and GNAS. Does not interact with G-alpha proteins when they are in complex with subunits beta and gamma.

Its subcellular location is the cytoplasm. It is found in the cell cortex. Chaperone that specifically binds and folds nascent G(s) G-alpha proteins (GNAS and GNAL) prior to G protein heterotrimer formation, promoting their association with the plasma membrane. Also acts as a guanine nucleotide exchange factor (GEF) for G(s) proteins by stimulating exchange of bound GDP for free GTP. Acts as an important component for odorant signal transduction by mediating GNAL (G(olf)-alpha) folding, thereby promoting-dependent cAMP accumulation in olfactory sensory neurons. This Rattus norvegicus (Rat) protein is Chaperone Ric-8B (Ric8b).